Here is a 312-residue protein sequence, read N- to C-terminus: Porphobilinogen deaminase (312 aa).

S-(dipyrrolylmethanemethyl)cysteine is present on Cys235.

This sequence belongs to the HMBS family. In terms of assembly, monomer. The cofactor is dipyrromethane.

It catalyses the reaction 4 porphobilinogen + H2O = hydroxymethylbilane + 4 NH4(+). The protein operates within porphyrin-containing compound metabolism; protoporphyrin-IX biosynthesis; coproporphyrinogen-III from 5-aminolevulinate: step 2/4. In terms of biological role, tetrapolymerization of the monopyrrole PBG into the hydroxymethylbilane pre-uroporphyrinogen in several discrete steps. This Mycolicibacterium gilvum (strain PYR-GCK) (Mycobacterium gilvum (strain PYR-GCK)) protein is Porphobilinogen deaminase.